Here is a 2703-residue protein sequence, read N- to C-terminus: MQSQRSRRRSRAPNTWICFWINKMHAVASLPASLPLLLLTLAFANLPNTVRGTDTALVAASCTSVGCQNGGTCVTQLNGKTYCACDSHYVGDYCEHRNPCNSMRCQNGGTCQVTFRNGRPGISCKCPLGFDESLCEIAVPNACDHVTCLNGGTCQLKTLEEYTCACANGYTGERCETKNLCASSPCRNGATCTALAGSSSFTCSCPPGFTGDTCSYDIEECQSNPCKYGGTCVNTHGSYQCMCPTGYTGKDCDTKYKPCSPSPCQNGGICRSNGLSYECKCPKGFEGKNCEQNYDDCLGHLCQNGGTCIDGISDYTCRCPPNFTGRFCQDDVDECAQRDHPVCQNGATCTNTHGSYSCICVNGWAGLDCSNNTDDCKQAACFYGATCIDGVGSFYCQCTKGKTGLLCHLDDACTSNPCHADAICDTSPINGSYACSCATGYKGVDCSEDIDECDQGSPCEHNGICVNTPGSYRCNCSQGFTGPRCETNINECESHPCQNEGSCLDDPGTFRCVCMPGFTGTQCEIDIDECQSNPCLNDGTCHDKINGFKCSCALGFTGARCQINIDDCQSQPCRNRGICHDSIAGYSCECPPGYTGTSCEININDCDSNPCHRGKCIDDVNSFKCLCDPGYTGYICQKQINECESNPCQFDGHCQDRVGSYYCQCQAGTSGKNCEVNVNECHSNPCNNGATCIDGINSYKCQCVPGFTGQHCEKNVDECISSPCANNGVCIDQVNGYKCECPRGFYDAHCLSDVDECASNPCVNEGRCEDGINEFICHCPPGYTGKRCELDIDECSSNPCQHGGTCYDKLNAFSCQCMPGYTGQKCETNIDDCVTNPCGNGGTCIDKVNGYKCVCKVPFTGRDCESKMDPCASNRCKNEAKCTPSSNFLDFSCTCKLGYTGRYCDEDIDECSLSSPCRNGASCLNVPGSYRCLCTKGYEGRDCAINTDDCASFPCQNGGTCLDGIGDYSCLCVDGFDGKHCETDINECLSQPCQNGATCSQYVNSYTCTCPLGFSGINCQTNDEDCTESSCLNGGSCIDGINGYNCSCLAGYSGANCQYKLNKCDSNPCLNGATCHEQNNEYTCHCPSGFTGKQCSEYVDWCGQSPCENGATCSQMKHQFSCKCSAGWTGKLCDVQTISCQDAADRKGLSLRQLCNNGTCKDYGNSHVCYCSQGYAGSYCQKEIDECQSQPCQNGGTCRDLIGAYECQCRQGFQGQNCELNIDDCAPNPCQNGGTCHDRVMNFSCSCPPGTMGIICEINKDDCKPGACHNNGSCIDRVGGFECVCQPGFVGARCEGDINECLSNPCSNAGTLDCVQLVNNYHCNCRPGHMGRHCEHKVDFCAQSPCQNGGNCNIRQSGHHCICNNGFYGKNCELSGQDCDSNPCRVGNCVVADEGFGYRCECPRGTLGEHCEIDTLDECSPNPCAQGAACEDLLGDYECLCPSKWKGKRCDIYDANYPGWNGGSGSGNDRYAADLEQQRAMCDKRGCTEKQGNGICDSDCNTYACNFDGNDCSLGINPWANCTANECWNKFKNGKCNEECNNAACHYDGHDCERKLKSCDSLFDAYCQKHYGDGFCDYGCNNAECSWDGLDCENKTQSPVLAEGAMSVVMLMNVEAFREIQAQFLRNMSHMLRTTVRLKKDALGHDIIINWKDNVRVPEIEDTDFARKNKILYTQQVHQTGIQIYLEIDNRKCTECFTHAVEAAEFLAATAAKHQLRNDFQIHSVRGIKNPGDEDNGEPPANVKYVITGIILVIIALAFFGMVLSTQRKRAHGVTWFPEGFRAPAAVMSRRRRDPHGQEMRNLNKQVAMQSQGVGQPGAHWSDDESDMPLPKRQRSDPVSGVGLGNNGGYASDHTMVSEYEEADQRVWSQAHLDVVDVRAIMTPPAHQDGGKHDVDARGPCGLTPLMIAAVRGGGLDTGEDIENNEDSTAQVISDLLAQGAELNATMDKTGETSLHLAARFARADAAKRLLDAGADANCQDNTGRTPLHAAVAADAMGVFQILLRNRATNLNARMHDGTTPLILAARLAIEGMVEDLITADADINAADNSGKTALHWAAAVNNTEAVNILLMHHANRDAQDDKDETPLFLAAREGSYEACKALLDNFANREITDHMDRLPRDVASERLHHDIVRLLDEHVPRSPQMLSMTPQAMIGSPPPGQQQPQLITQPTVISAGNGGNNGNGNASGKQSNQTAKQKAAKKAKLIEGSPDNGLDATGSLRRKASSKKTSAASKKAANLNGLNPGQLTGGVSGVPGVPPTNSAAQAAAAAAAAVAAMSHELEGSPVGVGMGGNLPSPYDTSSMYSNAMAAPLANGNPNTGAKQPPSYEDCIKNAQSMQSLQGNGLDMIKLDNYAYSMGSPFQQELLNGQGLGMNGNGQRNGVGPGVLPGGLCGMGGLSGAGNGNSHEQGLSPPYSNQSPPHSVQSSLALSPHAYLGSPSPAKSRPSLPTSPTHIQAMRHATQQKQFGGSNLNSLLGGANGGGVVGGGGGGGGGVGQGPQNSPVSLGIISPTGSDMGIMLAPPQSSKNSAIMQTISPQQQQQQQQQQQQQHQQQQQQQQQQQQQQQQQLGGLEFGSAGLDLNGFCGSPDSFHSGQMNPPSIQSSMSGSSPSTNMLSPSSQHNQQAFYQYLTPSSQHSGGHTPQHLVQTLDSYPTPSPESPGHWSSSSPRSNSDWSEGVQSPAANNLYISGGHQANKGSEAIYI.

Residues 1-52 (MQSQRSRRRSRAPNTWICFWINKMHAVASLPASLPLLLLTLAFANLPNTVRG) form the signal peptide. The Extracellular portion of the chain corresponds to 53 to 1745 (TDTALVAASC…NGEPPANVKY (1693 aa)). 4 EGF-like domains span residues 58–95 (VAASCTSVGCQNGGTCVTQLNGKTYCACDSHYVGDYCE), 96–136 (HRNP…SLCE), 139–176 (VPNACDHVTCLNGGTCQLKTLEEYTCACANGYTGERCE), and 177–215 (TKNLCASSPCRNGATCTALAGSSSFTCSCPPGFTGDTCS). 24 disulfides stabilise this stretch: Cys-62–Cys-73, Cys-67–Cys-83, Cys-85–Cys-94, Cys-100–Cys-111, Cys-105–Cys-124, Cys-126–Cys-135, Cys-143–Cys-154, Cys-148–Cys-164, Cys-166–Cys-175, Cys-181–Cys-192, Cys-186–Cys-203, Cys-205–Cys-214, Cys-221–Cys-232, Cys-226–Cys-241, Cys-243–Cys-252, Cys-259–Cys-270, Cys-264–Cys-279, Cys-281–Cys-290, Cys-297–Cys-308, Cys-302–Cys-317, Cys-319–Cys-328, Cys-335–Cys-349, Cys-343–Cys-358, and Cys-360–Cys-369. Thr-72 carries O-linked (Fuc...) threonine glycosylation. An O-linked (Fuc...) threonine glycan is attached at Thr-110. Residue Thr-153 is glycosylated (O-linked (Fuc...) threonine). Ser-183 carries an O-linked (Glc...) serine glycan. O-linked (Fuc...) threonine glycosylation occurs at Thr-191. Thr-210 is a glycosylation site (O-linked (GlcNAc...) threonine). The 37-residue stretch at 217–253 (DIEECQSNPCKYGGTCVNTHGSYQCMCPTGYTGKDCD) folds into the EGF-like 5; calcium-binding domain. An O-linked (Glc...) serine glycan is attached at Ser-223. Thr-231 carries an O-linked (Fuc...) threonine glycan. An EGF-like 6 domain is found at 255–291 (KYKPCSPSPCQNGGICRSNGLSYECKCPKGFEGKNCE). The EGF-like 7; calcium-binding domain maps to 293 to 329 (NYDDCLGHLCQNGGTCIDGISDYTCRCPPNFTGRFCQ). Residue Thr-307 is glycosylated (O-linked (Fuc...) threonine). Asn-322 carries N-linked (GlcNAc...) asparagine glycosylation. One can recognise an EGF-like 8; calcium-binding domain in the interval 331–370 (DVDECAQRDHPVCQNGATCTNTHGSYSCICVNGWAGLDCS). Residue Thr-348 is glycosylated (O-linked (Fuc...) threonine). Asn-371 carries N-linked (GlcNAc...) asparagine glycosylation. The EGF-like 9; calcium-binding domain maps to 372 to 408 (NTDDCKQAACFYGATCIDGVGSFYCQCTKGKTGLLCH). Intrachain disulfides connect Cys-376-Cys-387, Cys-381-Cys-396, Cys-398-Cys-407, Cys-413-Cys-424, Cys-418-Cys-435, Cys-437-Cys-446, Cys-453-Cys-465, and Cys-459-Cys-474. Thr-386 carries O-linked (Fuc...) threonine glycosylation. In terms of domain architecture, EGF-like 10 spans 409–447 (LDDACTSNPCHADAICDTSPINGSYACSCATGYKGVDCS). Ser-427 carries an O-linked (Glc...) serine glycan. Residue Asn-430 is glycosylated (N-linked (GlcNAc...) asparagine). The EGF-like 11; calcium-binding domain maps to 449-486 (DIDECDQGSPCEHNGICVNTPGSYRCNCSQGFTGPRCE). An N-linked (GlcNAc...) asparagine glycan is attached at Asn-475. 78 disulfides stabilise this stretch: Cys-476–Cys-485, Cys-492–Cys-503, Cys-497–Cys-512, Cys-514–Cys-523, Cys-530–Cys-541, Cys-535–Cys-550, Cys-552–Cys-561, Cys-568–Cys-579, Cys-573–Cys-588, Cys-590–Cys-599, Cys-606–Cys-616, Cys-611–Cys-625, Cys-627–Cys-636, Cys-643–Cys-654, Cys-648–Cys-663, Cys-665–Cys-674, Cys-681–Cys-692, Cys-686–Cys-701, Cys-703–Cys-712, Cys-719–Cys-730, Cys-724–Cys-739, Cys-741–Cys-750, Cys-757–Cys-768, Cys-762–Cys-777, Cys-779–Cys-788, Cys-795–Cys-806, Cys-800–Cys-815, Cys-817–Cys-826, Cys-833–Cys-844, Cys-838–Cys-853, Cys-855–Cys-864, Cys-871–Cys-882, Cys-876–Cys-893, Cys-895–Cys-904, Cys-911–Cys-923, Cys-917–Cys-932, Cys-934–Cys-943, Cys-950–Cys-961, Cys-955–Cys-970, Cys-972–Cys-981, Cys-988–Cys-999, Cys-993–Cys-1008, Cys-1010–Cys-1019, Cys-1026–Cys-1037, Cys-1031–Cys-1046, Cys-1048–Cys-1057, Cys-1064–Cys-1075, Cys-1069–Cys-1084, Cys-1086–Cys-1095, Cys-1102–Cys-1113, Cys-1107–Cys-1122, Cys-1124–Cys-1133, Cys-1155–Cys-1160, Cys-1171–Cys-1180, Cys-1187–Cys-1198, Cys-1192–Cys-1207, Cys-1209–Cys-1218, Cys-1225–Cys-1236, Cys-1230–Cys-1245, Cys-1247–Cys-1256, Cys-1263–Cys-1274, Cys-1268–Cys-1283, Cys-1285–Cys-1294, Cys-1301–Cys-1314, Cys-1306–Cys-1323, Cys-1325–Cys-1334, Cys-1341–Cys-1352, Cys-1346–Cys-1361, Cys-1363–Cys-1372, Cys-1379–Cys-1389, Cys-1384–Cys-1400, Cys-1402–Cys-1411, Cys-1419–Cys-1430, Cys-1424–Cys-1439, Cys-1441–Cys-1450, Cys-1482–Cys-1505, Cys-1487–Cys-1500, and Cys-1496–Cys-1512. Thr-481 is a glycosylation site (O-linked (GlcNAc...) threonine). Residues 488–524 (NINECESHPCQNEGSCLDDPGTFRCVCMPGFTGTQCE) form the EGF-like 12; calcium-binding domain. Ser-494 carries O-linked (Glc...) serine glycosylation. Ser-502 carries an O-linked (Fuc...) serine glycan. An O-linked (GlcNAc...) threonine glycan is attached at Thr-519. Residues 526–562 (DIDECQSNPCLNDGTCHDKINGFKCSCALGFTGARCQ) enclose the EGF-like 13; calcium-binding domain. The O-linked (Glc...) serine glycan is linked to Ser-532. The EGF-like 14; calcium-binding domain occupies 564–600 (NIDDCQSQPCRNRGICHDSIAGYSCECPPGYTGTSCE). The O-linked (Glc...) serine glycan is linked to Ser-570. An O-linked (GlcNAc...) threonine glycan is attached at Thr-595. Positions 602 to 637 (NINDCDSNPCHRGKCIDDVNSFKCLCDPGYTGYICQ) constitute an EGF-like 15; calcium-binding domain. A glycan (O-linked (Glc...) serine) is linked at Ser-608. The EGF-like 16; calcium-binding domain maps to 639-675 (QINECESNPCQFDGHCQDRVGSYYCQCQAGTSGKNCE). An O-linked (Glc...) serine glycan is attached at Ser-645. Residues 677–713 (NVNECHSNPCNNGATCIDGINSYKCQCVPGFTGQHCE) enclose the EGF-like 17; calcium-binding domain. Residue Ser-683 is glycosylated (O-linked (Glc...) serine). Residue Thr-691 is glycosylated (O-linked (Fuc...) threonine). The 37-residue stretch at 715–751 (NVDECISSPCANNGVCIDQVNGYKCECPRGFYDAHCL) folds into the EGF-like 18; calcium-binding domain. An O-linked (Glc...) serine glycan is attached at Ser-721. The 37-residue stretch at 753-789 (DVDECASNPCVNEGRCEDGINEFICHCPPGYTGKRCE) folds into the EGF-like 19; calcium-binding domain. A glycan (O-linked (Glc...) serine) is linked at Ser-759. Positions 791 to 827 (DIDECSSNPCQHGGTCYDKLNAFSCQCMPGYTGQKCE) constitute an EGF-like 20; calcium-binding domain. Residue Ser-797 is glycosylated (O-linked (Glc...) serine). O-linked (Fuc...) threonine glycosylation occurs at Thr-805. Thr-822 is a glycosylation site (O-linked (GlcNAc...) threonine). The 37-residue stretch at 829 to 865 (NIDDCVTNPCGNGGTCIDKVNGYKCVCKVPFTGRDCE) folds into the EGF-like 21; calcium-binding domain. O-linked (Fuc...) threonine glycosylation occurs at Thr-843. One can recognise an EGF-like 22 domain in the interval 867-905 (KMDPCASNRCKNEAKCTPSSNFLDFSCTCKLGYTGRYCD). The 38-residue stretch at 907–944 (DIDECSLSSPCRNGASCLNVPGSYRCLCTKGYEGRDCA) folds into the EGF-like 23; calcium-binding domain. O-linked (Fuc...) serine glycosylation is present at Ser-922. Positions 946 to 982 (NTDDCASFPCQNGGTCLDGIGDYSCLCVDGFDGKHCE) constitute an EGF-like 24; calcium-binding domain. An O-linked (Glc...) serine glycan is attached at Ser-952. An O-linked (Fuc...) threonine glycan is attached at Thr-960. Residues 984–1020 (DINECLSQPCQNGATCSQYVNSYTCTCPLGFSGINCQ) form the EGF-like 25 domain. Ser-990 carries O-linked (Glc...) serine glycosylation. O-linked (Fuc...) threonine glycosylation occurs at Thr-998. One can recognise an EGF-like 26; calcium-binding domain in the interval 1022–1058 (NDEDCTESSCLNGGSCIDGINGYNCSCLAGYSGANCQ). Ser-1036 carries O-linked (Fuc...) serine glycosylation. A glycan (N-linked (GlcNAc...) asparagine) is linked at Asn-1045. EGF-like domains follow at residues 1060–1096 (KLNKCDSNPCLNGATCHEQNNEYTCHCPSGFTGKQCS), 1098–1134 (YVDWCGQSPCENGATCSQMKHQFSCKCSAGWTGKLCD), and 1136–1181 (QTIS…SYCQ). O-linked (Glc...) serine glycosylation is present at Ser-1066. The O-linked (Fuc...) threonine glycan is linked to Thr-1074. A glycan (O-linked (Fuc...) threonine) is linked at Thr-1112. N-linked (GlcNAc...) asparagine glycosylation is present at Asn-1157. Residues 1183-1219 (EIDECQSQPCQNGGTCRDLIGAYECQCRQGFQGQNCE) enclose the EGF-like 30; calcium-binding domain. Ser-1189 is a glycosylation site (O-linked (Glc...) serine). O-linked (Fuc...) threonine glycosylation is present at Thr-1197. Residues 1221 to 1257 (NIDDCAPNPCQNGGTCHDRVMNFSCSCPPGTMGIICE) form the EGF-like 31; calcium-binding domain. Thr-1235 carries O-linked (Fuc...) threonine glycosylation. N-linked (GlcNAc...) asparagine glycosylation occurs at Asn-1242. Residues 1259-1295 (NKDDCKPGACHNNGSCIDRVGGFECVCQPGFVGARCE) enclose the EGF-like 32; calcium-binding domain. Asn-1271 carries an N-linked (GlcNAc...) asparagine glycan. The O-linked (Fuc...) serine glycan is linked to Ser-1273. EGF-like domains are found at residues 1297-1335 (DINECLSNPCSNAGTLDCVQLVNNYHCNCRPGHMGRHCE), 1337-1373 (KVDFCAQSPCQNGGNCNIRQSGHHCICNNGFYGKNCE), 1375-1412 (SGQDCDSNPCRVGNCVVADEGFGYRCECPRGTLGEHCE), and 1415-1451 (TLDECSPNPCAQGAACEDLLGDYECLCPSKWKGKRCD). An O-linked (Glc...) serine glycan is attached at Ser-1303. O-linked (Glc...) serine glycosylation occurs at Ser-1381. LNR repeat units lie at residues 1482-1521 (CDKRGCTEKQGNGICDSDCNTYACNFDGNDCSLGINPWAN), 1522-1557 (CTANECWNKFKNGKCNEECNNAACHYDGHDCERKLK), and 1559-1599 (CDSL…TQSP). N-linked (GlcNAc...) asparagine glycosylation occurs at Asn-1521. Cystine bridges form between Cys-1522/Cys-1545, Cys-1527/Cys-1540, Cys-1536/Cys-1552, Cys-1559/Cys-1585, Cys-1567/Cys-1580, and Cys-1576/Cys-1592. N-linked (GlcNAc...) asparagine glycosylation is found at Asn-1594 and Asn-1627. A helical transmembrane segment spans residues 1746–1766 (VITGIILVIIALAFFGMVLST). The Cytoplasmic portion of the chain corresponds to 1767 to 2703 (QRKRAHGVTW…ANKGSEAIYI (937 aa)). Residues 1810-1850 (QSQGVGQPGAHWSDDESDMPLPKRQRSDPVSGVGLGNNGGY) are disordered. 7 ANK repeats span residues 1901 to 1945 (CGLT…ELNA), 1950 to 1979 (TGETSLHLAARFARADAAKRLLDAGADANC), 1983 to 2013 (TGRTPLHAAVAADAMGVFQILLRNRATNLNA), 2017 to 2046 (DGTTPLILAARLAIEGMVEDLITADADINA), 2050 to 2079 (SGKTALHWAAAVNNTEAVNILLMHHANRDA), 2083 to 2112 (KDETPLFLAAREGSYEACKALLDNFANREI), and 2116 to 2139 (MDRLPRDVASERLHHDIVRLLDEH). A disordered region spans residues 2172-2257 (TVISAGNGGN…LTGGVSGVPG (86 aa)). A compositionally biased stretch (low complexity) spans 2228-2238 (KKTSAASKKAA). The interaction with Nedd4 stretch occupies residues 2325 to 2328 (PPSY). Disordered regions lie at residues 2399 to 2452 (SGAG…PTSP), 2488 to 2524 (GGGGGGGVGQGPQNSPVSLGIISPTGSDMGIMLAPPQ), 2579 to 2620 (LDLN…PSSQ), and 2632 to 2703 (PSSQ…AIYI). Residues 2414–2429 (PYSNQSPPHSVQSSLA) are compositionally biased toward polar residues. Ser-2447 carries the post-translational modification Phosphoserine. Residues 2488–2497 (GGGGGGGVGQ) are compositionally biased toward gly residues. The segment covering 2598-2619 (PPSIQSSMSGSSPSTNMLSPSS) has biased composition (low complexity). Residues 2632 to 2653 (PSSQHSGGHTPQHLVQTLDSYP) are compositionally biased toward polar residues. Low complexity predominate over residues 2659–2675 (SPGHWSSSSPRSNSDWS). Over residues 2677-2687 (GVQSPAANNLY) the composition is skewed to polar residues.

Belongs to the NOTCH family. As to quaternary structure, homomer. Interacts with Su(H) when activated. Interacts with Dx via its ANK repeats. Interacts with Delta via the EGF repeats and the Delta EGF repeats. Interacts with Nedd4 and Su(dx). Interacts with O-fut1; the interaction glycosylates N and transports N to early endosomes. Interacts with Akap200; the interaction stabilizes N/Notch protein levels by preventing Cbl-mediated ubiquitination and subsequent lysosomal degradation of N/Notch. In terms of processing, upon binding its ligands such as Delta or Serrate, it is cleaved (S2 cleavage) in its extracellular domain, close to the transmembrane domain. S2 cleavage is probably mediated by Kuz. It is then cleaved (S3 cleavage) downstream of its transmembrane domain, releasing it from the cell membrane. S3 cleavage requires Psn. O-glycosylated. Three forms of O-glycosylation (O-fucosylation, O-glucosylation and O-GlcNAcylation) are detected. O-fucosylated by O-fut1 and fng in the EGF repeat domain inhibits both Serrate/Ser- and Delta/Dl-binding. O-glucosylation by rumi in the endoplasmic reticulum is necessary for correct folding and signaling. Post-translationally, ubiquitinated by various ubiquitin ligases; which promotes ligand-independent endocytosis and proteasomal degradation. Ubiquitinated by Nedd4. May also be ubiquitinated by Su(dx) and Cbl. Mono-ubiquitinated, possibly by dx/deltex; this may be involved in the ESCRT-III mediated targeting to multivesicular bodies.

It is found in the cell membrane. Its subcellular location is the endosome. The protein localises to the multivesicular body. The protein resides in the nucleus. Functionally, essential signaling protein which has a major role in many developmental processes. Functions as a receptor for membrane-bound ligands Delta and Serrate to regulate cell-fate determination. Upon ligand activation, and releasing from the cell membrane, the Notch intracellular domain (NICD) forms a transcriptional activator complex with Su(H) (Suppressor of hairless) and activates genes of the E(spl) complex. Regulates oogenesis, the differentiation of the ectoderm and the development of the central and peripheral nervous system, eye, wing disk, muscles and segmental appendages such as antennae and legs, through lateral inhibition or induction. Regulates neuroblast self-renewal, identity and proliferation through the regulation of bHLH-O proteins; in larval brains, involved in the maintenance of type II neuroblast self-renewal and identity by suppressing erm expression together with pnt; might also regulate dpn expression through the activation of the transcriptional regulator Su(H). Targeted for ESCRT-mediated endosomal sequestration and lysosomal degradation by various E3 ubiquitin ligases to regulate the Notch signaling pathway. Can undergo ligand-dependent and non-canonical ligand-independent activation. Ligand-independent activation is dependent on endosome acidification and probably occurs in late endosomes or lysosome. Ectopic ligand-independent activation occurs when disruption of the endolysosomal pathway, particularly of the ESCRT-III complex, prevents sequestration of the receptor in intraluminal vesicles of multivesicular bodies. This Drosophila melanogaster (Fruit fly) protein is Neurogenic locus Notch protein.